The following is a 163-amino-acid chain: Probable histone H2A.4 (163 aa).

Disordered regions lie at residues 1 to 30 (MEVG…VSRS) and 134 to 163 (SAAA…AAAA). The segment covering 12–21 (GAGGRRGGGG) has biased composition (gly residues). The segment covering 147-163 (KSPKKATTKSPKKAAAA) has biased composition (basic residues). Short sequence motifs (SPKK motif) lie at residues 148–151 (SPKK) and 156–159 (SPKK).

Belongs to the histone H2A family. As to quaternary structure, the nucleosome is a histone octamer containing two molecules each of H2A, H2B, H3 and H4 assembled in one H3-H4 heterotetramer and two H2A-H2B heterodimers. The octamer wraps approximately 147 bp of DNA.

It localises to the nucleus. The protein localises to the chromosome. In terms of biological role, core component of nucleosome. Nucleosomes wrap and compact DNA into chromatin, limiting DNA accessibility to the cellular machineries which require DNA as a template. Histones thereby play a central role in transcription regulation, DNA repair, DNA replication and chromosomal stability. DNA accessibility is regulated via a complex set of post-translational modifications of histones, also called histone code, and nucleosome remodeling. This Oryza sativa subsp. indica (Rice) protein is Probable histone H2A.4.